The chain runs to 417 residues: NADH-quinone oxidoreductase subunit D (417 aa).

Belongs to the complex I 49 kDa subunit family. NDH-1 is composed of 14 different subunits. Subunits NuoB, C, D, E, F, and G constitute the peripheral sector of the complex.

It localises to the cell inner membrane. It catalyses the reaction a quinone + NADH + 5 H(+)(in) = a quinol + NAD(+) + 4 H(+)(out). NDH-1 shuttles electrons from NADH, via FMN and iron-sulfur (Fe-S) centers, to quinones in the respiratory chain. The immediate electron acceptor for the enzyme in this species is believed to be ubiquinone. Couples the redox reaction to proton translocation (for every two electrons transferred, four hydrogen ions are translocated across the cytoplasmic membrane), and thus conserves the redox energy in a proton gradient. The protein is NADH-quinone oxidoreductase subunit D of Paraburkholderia phytofirmans (strain DSM 17436 / LMG 22146 / PsJN) (Burkholderia phytofirmans).